The primary structure comprises 192 residues: MEYRSLTLDDFLSRFQLLRPQINRETLNHRQAAVLIPIVRRPQPGLLLTQRSIHLRKHAGQVAFPGGAVDDTDASVIAAALREAEEEVAIPPSAVEVIGVLPPVDSVTGYQVTPVIGIIPPDLPYRASEDEVSAVFEMPLAQALHLGRYHPLDIYRRGDSHRVWLSWYEQYFVWGMTAGIIRELALQIGVKP.

The Nudix hydrolase domain occupies 29–160 (HRQAAVLIPI…PLDIYRRGDS (132 aa)). Positions 67-89 (GAVDDTDASVIAAALREAEEEVA) match the Nudix box motif. Mg(2+) is bound by residues Glu83 and Glu87.

It belongs to the Nudix hydrolase family. PCD1 subfamily. Mn(2+) serves as cofactor. It depends on Mg(2+) as a cofactor.

Functionally, probably mediates the hydrolysis of some nucleoside diphosphate derivatives. This is an uncharacterized protein from Shigella boydii serotype 4 (strain Sb227).